Consider the following 82-residue polypeptide: uncharacterized protein (82 aa).

This is an uncharacterized protein from Dictyostelium discoideum (Social amoeba).